The chain runs to 311 residues: Deacetoxycephalosporin C synthase (311 aa).

Positions 154–267 constitute a Fe2OG dioxygenase domain; that stretch reads DCEPLLRFRY…RTSSVFFLRP (114 aa).

This sequence belongs to the iron/ascorbate-dependent oxidoreductase family. Fe cation is required as a cofactor. L-ascorbate serves as cofactor.

The enzyme catalyses penicillin N + 2-oxoglutarate + O2 = deacetoxycephalosporin C + succinate + CO2 + H2O. The protein operates within antibiotic biosynthesis; cephalosporin C biosynthesis. In terms of biological role, catalyzes the step from penicillin N to deacetoxy-cephalosporin C. This is Deacetoxycephalosporin C synthase (cefE) from Streptomyces clavuligerus.